The chain runs to 601 residues: A-type ATP synthase subunit A (601 aa).

Gly-235–Thr-242 lines the ATP pocket.

Belongs to the ATPase alpha/beta chains family. In terms of assembly, has multiple subunits with at least A(3), B(3), C, D, E, F, H, I and proteolipid K(x).

It localises to the cell membrane. The enzyme catalyses ATP + H2O + 4 H(+)(in) = ADP + phosphate + 5 H(+)(out). Its function is as follows. Component of the A-type ATP synthase that produces ATP from ADP in the presence of a proton gradient across the membrane. The A chain is the catalytic subunit. The sequence is that of A-type ATP synthase subunit A from Thermofilum pendens (strain DSM 2475 / Hrk 5).